A 177-amino-acid chain; its full sequence is Large ribosomal subunit protein uL6 (177 aa).

It belongs to the universal ribosomal protein uL6 family. In terms of assembly, part of the 50S ribosomal subunit.

Its function is as follows. This protein binds to the 23S rRNA, and is important in its secondary structure. It is located near the subunit interface in the base of the L7/L12 stalk, and near the tRNA binding site of the peptidyltransferase center. This Methylococcus capsulatus (strain ATCC 33009 / NCIMB 11132 / Bath) protein is Large ribosomal subunit protein uL6.